The following is a 319-amino-acid chain: tRNA uridine(34) hydroxylase (319 aa).

The 95-residue stretch at 127 to 221 (KQEDTVIIDA…YGKDPEVQGE (95 aa)) folds into the Rhodanese domain. Cys-181 serves as the catalytic Cysteine persulfide intermediate.

This sequence belongs to the TrhO family.

It carries out the reaction uridine(34) in tRNA + AH2 + O2 = 5-hydroxyuridine(34) in tRNA + A + H2O. Catalyzes oxygen-dependent 5-hydroxyuridine (ho5U) modification at position 34 in tRNAs. This Bacillus thuringiensis (strain Al Hakam) protein is tRNA uridine(34) hydroxylase.